We begin with the raw amino-acid sequence, 447 residues long: UDP-N-acetylmuramoylalanine--D-glutamate ligase (447 aa).

112–118 serves as a coordination point for ATP; the sequence is GTNGKST.

It belongs to the MurCDEF family.

It localises to the cytoplasm. The enzyme catalyses UDP-N-acetyl-alpha-D-muramoyl-L-alanine + D-glutamate + ATP = UDP-N-acetyl-alpha-D-muramoyl-L-alanyl-D-glutamate + ADP + phosphate + H(+). Its pathway is cell wall biogenesis; peptidoglycan biosynthesis. Its function is as follows. Cell wall formation. Catalyzes the addition of glutamate to the nucleotide precursor UDP-N-acetylmuramoyl-L-alanine (UMA). In Legionella pneumophila (strain Paris), this protein is UDP-N-acetylmuramoylalanine--D-glutamate ligase.